The following is a 544-amino-acid chain: POTE ankyrin domain family member B2 (544 aa).

ANK repeat units follow at residues 135-167, 168-200, 201-233, 234-266, and 267-299; these read QKRT…VLDN, KKRT…IQDE, YGNT…SKNK, CGLT…ALDR, and YGRT…SQDL. The disordered stretch occupies residues 332 to 457; it reads SSENSNPEQD…NTGISQDEIL (126 aa). Basic and acidic residues-rich tracts occupy residues 340-355 and 364-375; these read QDLK…RLKV and MSQEPEINKDCD. Residues 439–457 are compositionally biased toward polar residues; that stretch reads TQKQLSEEQNTGISQDEIL.

It belongs to the POTE family.

The chain is POTE ankyrin domain family member B2 (POTEB2) from Homo sapiens (Human).